Consider the following 309-residue polypeptide: MKAIVLLNMGGPNNLEEVELFLRNMFNDKNILPIRNDLLRKFVAYMITQGRKKEARSNYEKLGGKSPLNFYTDRLIAKLQKRLPDVYVTKAMRYTPPFAKEAIKELMYHNVREVFLIPLYPHYSTTTTKSSLEDFYNMAKGVGYHARFHDIANFYENRLYNQAIIERIEEALDGEDTKEYELVFSAHSLPQKIIEKGDPYLQEVQEHVKILTSILEEKFSGYHLAFQSKLGPVKWLEPGLDEKLEELKGKKILVYPISFTLDNSETEFELHIEYAQIAQKIGVKKYKVARCPNESDRFVDALVDIYQRM.

2 residues coordinate Fe cation: H187 and E265.

Belongs to the ferrochelatase family.

The protein localises to the cytoplasm. The enzyme catalyses heme b + 2 H(+) = protoporphyrin IX + Fe(2+). It functions in the pathway porphyrin-containing compound metabolism; protoheme biosynthesis; protoheme from protoporphyrin-IX: step 1/1. Its function is as follows. Catalyzes the ferrous insertion into protoporphyrin IX. The sequence is that of Ferrochelatase from Nitratiruptor sp. (strain SB155-2).